The following is a 329-amino-acid chain: Acetyl-coenzyme A carboxylase carboxyl transferase subunit alpha (329 aa).

Residues 40 to 294 form the CoA carboxyltransferase C-terminal domain; it reads QLETLAARRR…KESLIRNLRE (255 aa).

This sequence belongs to the AccA family. As to quaternary structure, acetyl-CoA carboxylase is a heterohexamer composed of biotin carboxyl carrier protein (AccB), biotin carboxylase (AccC) and two subunits each of ACCase subunit alpha (AccA) and ACCase subunit beta (AccD).

It is found in the cytoplasm. It carries out the reaction N(6)-carboxybiotinyl-L-lysyl-[protein] + acetyl-CoA = N(6)-biotinyl-L-lysyl-[protein] + malonyl-CoA. It functions in the pathway lipid metabolism; malonyl-CoA biosynthesis; malonyl-CoA from acetyl-CoA: step 1/1. Component of the acetyl coenzyme A carboxylase (ACC) complex. First, biotin carboxylase catalyzes the carboxylation of biotin on its carrier protein (BCCP) and then the CO(2) group is transferred by the carboxyltransferase to acetyl-CoA to form malonyl-CoA. This is Acetyl-coenzyme A carboxylase carboxyl transferase subunit alpha from Prochlorococcus marinus (strain MIT 9211).